The following is an 807-amino-acid chain: Glycerol-3-phosphate acyltransferase (807 aa).

The short motif at 308 to 313 is the HXXXXD motif element; sequence CHRSHM.

Belongs to the GPAT/DAPAT family.

It localises to the cell inner membrane. The enzyme catalyses sn-glycerol 3-phosphate + an acyl-CoA = a 1-acyl-sn-glycero-3-phosphate + CoA. It participates in phospholipid metabolism; CDP-diacylglycerol biosynthesis; CDP-diacylglycerol from sn-glycerol 3-phosphate: step 1/3. The protein is Glycerol-3-phosphate acyltransferase of Shewanella baltica (strain OS155 / ATCC BAA-1091).